Here is a 255-residue protein sequence, read N- to C-terminus: UDP-2,3-diacylglucosamine hydrolase (255 aa).

Mn(2+) contacts are provided by Asp-8, His-10, Asp-41, Asn-79, and His-114. Residue Asn-79–Arg-80 participates in substrate binding. Residues Asp-122, Ser-160, Asn-164, Lys-167, and His-195 each coordinate substrate. Residues His-195 and His-197 each contribute to the Mn(2+) site.

This sequence belongs to the LpxH family. The cofactor is Mn(2+).

It localises to the cell inner membrane. The catalysed reaction is UDP-2-N,3-O-bis[(3R)-3-hydroxytetradecanoyl]-alpha-D-glucosamine + H2O = 2-N,3-O-bis[(3R)-3-hydroxytetradecanoyl]-alpha-D-glucosaminyl 1-phosphate + UMP + 2 H(+). The protein operates within glycolipid biosynthesis; lipid IV(A) biosynthesis; lipid IV(A) from (3R)-3-hydroxytetradecanoyl-[acyl-carrier-protein] and UDP-N-acetyl-alpha-D-glucosamine: step 4/6. Functionally, hydrolyzes the pyrophosphate bond of UDP-2,3-diacylglucosamine to yield 2,3-diacylglucosamine 1-phosphate (lipid X) and UMP by catalyzing the attack of water at the alpha-P atom. Involved in the biosynthesis of lipid A, a phosphorylated glycolipid that anchors the lipopolysaccharide to the outer membrane of the cell. The protein is UDP-2,3-diacylglucosamine hydrolase of Hamiltonella defensa subsp. Acyrthosiphon pisum (strain 5AT).